The primary structure comprises 742 residues: Feeding circuit activating peptides (742 aa).

A signal peptide spans 1 to 22 (MTFAASFRALLCVLFCAALVHC). Positions 23–98 (KTRTKRYVPH…YGALADRDVD (76 aa)) are excised as a propeptide. The propeptide at 117 to 131 (GSLDAIPQDTDASSD) is connecting peptide. 20 propeptides span residues 164–168 (GSGAE), 202–220 (RGTGGQMHASSPRVVPWGS), 236–253 (DTELVENRQTTGQQTEVN), 271–275 (SGEAG), 293–297 (ADDQG), 315–321 (FDNSAGE), 339–341 (AGD), 359–366 (FDNDISGQ), 384–388 (SDQDN), 406–410 (ADDDG), 428–432 (ADEDD), 450–454 (GDEDD), 472–476 (ADEDD), 494–498 (SDEDD), 516–520 (SDEDD), 538–542 (ADEDD), 560–564 (NSPGL), 582–592 (NNEYYSGAENE), 610–614 (DQPGE), and 647–742 (NSAD…AGQM).

Expressed in pleural, pedal, abdominal, buccal and cerebral ganglia.

The protein resides in the secreted. In terms of biological role, initiates organized rhythmic motor output of feeding circuit. The chain is Feeding circuit activating peptides from Aplysia californica (California sea hare).